The sequence spans 142 residues: UPF0102 protein Bcep18194_A3391 (142 aa).

Residues 1–27 (MCHAAPARPGDGRGLPRAGDNFSGAAR) are disordered.

It belongs to the UPF0102 family.

The protein is UPF0102 protein Bcep18194_A3391 of Burkholderia lata (strain ATCC 17760 / DSM 23089 / LMG 22485 / NCIMB 9086 / R18194 / 383).